The primary structure comprises 171 residues: Co-chaperone protein HscB homolog (171 aa).

The region spanning 2–74 is the J domain; that stretch reads NYFELFGLPI…LRRAEYLLSL (73 aa).

It belongs to the HscB family. Interacts with HscA and stimulates its ATPase activity.

In terms of biological role, co-chaperone involved in the maturation of iron-sulfur cluster-containing proteins. Seems to help targeting proteins to be folded toward HscA. This chain is Co-chaperone protein HscB homolog, found in Vibrio cholerae serotype O1 (strain ATCC 39541 / Classical Ogawa 395 / O395).